A 166-amino-acid polypeptide reads, in one-letter code: MARNKEIEIDTRLGRRSVDADKVVHFPRGLAGFENERDFILLQIRPEAPLLILQSMSNPVVGLLVADPYSFMEKSAYAPAMGEAEKQLLRISDLDEAAVLVTVTIPAGQPGEAALNLAGPIVINSRERVGLQVPQCSDGPQQIYMHSLKPVGESGQAEKSEAAPAE.

This sequence belongs to the FliW family. As to quaternary structure, interacts with translational regulator CsrA and flagellin(s).

Its subcellular location is the cytoplasm. Acts as an anti-CsrA protein, binds CsrA and prevents it from repressing translation of its target genes, one of which is flagellin. Binds to flagellin and participates in the assembly of the flagellum. The polypeptide is Flagellar assembly factor FliW (Desulfovibrio desulfuricans (strain ATCC 27774 / DSM 6949 / MB)).